Reading from the N-terminus, the 599-residue chain is E3 ubiquitin-protein ligase Kcmf1 (599 aa).

The ZZ-type zinc-finger motif lies at 4 to 60 (HEGVSCDSCLKSNFNGRRYKCLICYDYDLCADCYEDGVTSTRHLVEHPMQCILTRSD). The Zn(2+) site is built by Cys9, Cys12, Cys24, Cys27, Cys33, Cys36, His46, and His50. A C2H2-type zinc finger spans residues 78–101 (FTCPYCKKMGFSDATLLEHVSAEH). Disordered regions lie at residues 155-193 (HGGG…PSGR), 229-253 (DRQQ…VSTS), 269-294 (GSGG…NLRT), 466-486 (VEQQ…VNQM), and 507-599 (NTTQ…PDTR). Composition is skewed to low complexity over residues 160 to 170 (RRIPGRTLGGP) and 180 to 192 (SSSS…SPSG). Gly residues predominate over residues 269–285 (GSGGSGAVGSGSGGGSG). Over residues 513 to 532 (GTGGLGGAGATAAPGGGASG) the composition is skewed to gly residues. The segment covering 538 to 547 (TADRGIERRS) has biased composition (basic and acidic residues). The span at 559–593 (SQQPQQQQQSTANPAASQQKYKQNASAATAAGNTN) shows a compositional bias: low complexity.

This sequence belongs to the KCMF1 family. In terms of assembly, interacts with poe.

It catalyses the reaction S-ubiquitinyl-[E2 ubiquitin-conjugating enzyme]-L-cysteine + [acceptor protein]-L-lysine = [E2 ubiquitin-conjugating enzyme]-L-cysteine + N(6)-ubiquitinyl-[acceptor protein]-L-lysine.. Its function is as follows. Has intrinsic E3 ubiquitin ligase activity and promotes ubiquitination. Involved in the negative regulation of the Ras/MAPK signaling pathway in the wing by acting with the E2 enzyme Unc6 and the putative E3 ligases poe and Ufd4 to mediate the ubiquitination and proteasomal degradation of rl/MAPK. The protein is E3 ubiquitin-protein ligase Kcmf1 of Drosophila melanogaster (Fruit fly).